The sequence spans 97 residues: Mapk-regulated corepressor-interacting protein 1 (97 aa).

Residues 1 to 29 (MTSSPVSRVVYNGKRNSSPRSPTNSSEIF) are disordered. The segment covering 15–26 (RNSSPRSPTNSS) has biased composition (low complexity). The residue at position 21 (serine 21) is a Phosphoserine. A Phosphothreonine modification is found at threonine 30. The residue at position 41 (tyrosine 41) is a Phosphotyrosine. Lysine 79 carries the post-translational modification N6-acetyllysine. The PXDLS motif signature appears at 80 to 84 (PIDLS).

The protein belongs to the MCRIP family. In terms of assembly, interacts (unphosphorylated form, via the PXDLS motif) with CTBP1, competitively inhibiting CTBP-ZEB1 interaction. Interacts with CTBP2. Interacts with MCRIP2. Interacts with DDX6. In terms of processing, phosphorylation by MAPK3/1 (ERK1/2) regulates MCRIP1 binding to CTBP(s). As to expression, widely expressed (at protein level).

Its subcellular location is the nucleus. It localises to the cytoplasm. It is found in the stress granule. The phosphorylation status of MCRIP1 functions as a molecular switch to regulate epithelial-mesenchymal transition. Unphosphorylated MCRIP1 binds to and inhibits the transcriptional corepressor CTBP(s). When phosphorylated by MAPK/ERK, MCRIP1 releases CTBP(s) resulting in transcriptional silencing of the E-cadherin gene and induction of epithelial-mesenchymal transition. The polypeptide is Mapk-regulated corepressor-interacting protein 1 (Mcrip1) (Mus musculus (Mouse)).